Reading from the N-terminus, the 89-residue chain is Large ribosomal subunit protein bL27 (89 aa).

The tract at residues 1-22 (MAHKKAGGSSRNGRDSAGRRLG) is disordered.

This sequence belongs to the bacterial ribosomal protein bL27 family.

The protein is Large ribosomal subunit protein bL27 of Dinoroseobacter shibae (strain DSM 16493 / NCIMB 14021 / DFL 12).